Consider the following 401-residue polypeptide: Imidazolonepropionase (401 aa).

Fe(3+)-binding residues include His-66 and His-68. Residues His-66 and His-68 each contribute to the Zn(2+) site. The 4-imidazolone-5-propanoate site is built by Arg-75, Tyr-138, and His-171. Tyr-138 lines the N-formimidoyl-L-glutamate pocket. His-236 serves as a coordination point for Fe(3+). His-236 contacts Zn(2+). Gln-239 is a 4-imidazolone-5-propanoate binding site. Residue Asp-311 participates in Fe(3+) binding. Zn(2+) is bound at residue Asp-311. 2 residues coordinate N-formimidoyl-L-glutamate: Asn-313 and Gly-315. Residue Thr-316 coordinates 4-imidazolone-5-propanoate.

Belongs to the metallo-dependent hydrolases superfamily. HutI family. The cofactor is Zn(2+). Requires Fe(3+) as cofactor.

Its subcellular location is the cytoplasm. The enzyme catalyses 4-imidazolone-5-propanoate + H2O = N-formimidoyl-L-glutamate. It participates in amino-acid degradation; L-histidine degradation into L-glutamate; N-formimidoyl-L-glutamate from L-histidine: step 3/3. In terms of biological role, catalyzes the hydrolytic cleavage of the carbon-nitrogen bond in imidazolone-5-propanoate to yield N-formimidoyl-L-glutamate. It is the third step in the universal histidine degradation pathway. The protein is Imidazolonepropionase of Pseudomonas putida (strain GB-1).